The sequence spans 1738 residues: Sodium leak channel NALCN (1738 aa).

Over 1–36 (MLKRKQSSRVEAQPVTDFGPDESLSDNADILWINKP) the chain is Cytoplasmic. Residues 37-57 (WVHSLLRICAIISVIPVCMNT) form a helical membrane-spanning segment. The Extracellular portion of the chain corresponds to 58 to 65 (PMTFEHYP). The helical transmembrane segment at 66–90 (PLQYVTFTLDTLLMFLYTAEMIAKM) threads the bilayer. The Cytoplasmic segment spans residues 91–106 (HIRGIVKGDSSYVKDR). Residues 107–129 (WCVFDGFMVFCLWVSLVLQVFEI) form a helical membrane-spanning segment. At 130-137 (ADIVDQMS) the chain is on the extracellular side. Residues 138-158 (PWGMLRIPRPLIMIRAFRIYF) traverse the membrane as a helical; Voltage-sensor segment. Residues 159–173 (RFELPRTRITNILKR) lie on the Cytoplasmic side of the membrane. Residues 174–199 (SGEQIWSVSIFLLFFLLLYGILGVQM) traverse the membrane as a helical segment. The Extracellular portion of the chain corresponds to 200–269 (FGTFTYHCVV…YSGFNEIGTS (70 aa)). 2 cysteine pairs are disulfide-bonded: C207-C239 and C229-C245. 2 N-linked (GlcNAc...) asparagine glycosylation sites follow: N210 and N216. An intramembrane region (pore-forming) is located at residues 270-289 (IFTVYEASSQEGWVFLMYRA). Topologically, residues 290–294 (IDSFP) are extracellular. The helical transmembrane segment at 295–322 (RWRSYFYFITLIFFLAWLVKNVFIAVII) threads the bilayer. Over 323-382 (ETFAEIRVQFQQMWGTRSSTTSTATTQMFHEDAAGGWQLVAVDVNKPQGRAPACLQKMMR) the chain is Cytoplasmic. Residues 383–403 (SSVFHMFILSMVTVDVIVAAS) form a helical membrane-spanning segment. The Extracellular portion of the chain corresponds to 404 to 416 (NYYKGENFRRQYD). A helical transmembrane segment spans residues 417 to 439 (EFYLAEVAFTVLFDLEALLKIWC). Over 440–447 (LGFTGYIS) the chain is Cytoplasmic. A helical membrane pass occupies residues 448-468 (SSLHKFELLLVIGTTLHVYPD). Residues 469–472 (LYHS) are Extracellular-facing. Residues 473–492 (QFTYFQVLRVVRLIKISPAL) traverse the membrane as a helical; Voltage-sensor segment. Topologically, residues 493-502 (EDFVYKIFGP) are cytoplasmic. A helical membrane pass occupies residues 503-530 (GKKLGSLVVFTASLLIVMSAISLQMFCF). At 531-543 (VEELDRFTTFPRA) the chain is on the extracellular side. The segment at residues 544–563 (FMSMFQILTQEGWVDVMDQT) is an intramembrane region (pore-forming). The Extracellular segment spans residues 564 to 569 (LNAVGH). Residues 570–599 (MWAPLVAIYFILYHLFATLILLSLFVAVIL) traverse the membrane as a helical segment. Over 600 to 886 (DNLELDEDLK…QLYDLLGLVT (287 aa)) the chain is Cytoplasmic. The disordered stretch occupies residues 762–789 (QERRSLRHGSNSQRISRGKSLETLTQDH). A coiled-coil region spans residues 795-830 (YRNAQREDSEIKMIQEKKEQAEMKRKVQEEELRENH). Residues 887-906 (YLDWVMITVTICSCISMMFE) form a helical membrane-spanning segment. The Extracellular segment spans residues 907–915 (SPFRRVMHA). The chain crosses the membrane as a helical span at residues 916–939 (PTLQIAEYVFVIFMSIELNLKIMA). At 940–947 (DGLFFTPT) the chain is on the cytoplasmic side. Residues 948–972 (AVIRDFGGVMDIFIYLVSLIFLCWM) traverse the membrane as a helical segment. The Extracellular portion of the chain corresponds to 973–980 (PQNVPAES). Residues 981 to 1003 (GAQLLMVLRCLRPLRIFKLVPQM) form a helical; Voltage-sensor membrane-spanning segment. Residues 1004–1015 (RKVVRELFSGFK) lie on the Cytoplasmic side of the membrane. Residues 1016-1039 (EIFLVSILLLTLMLVFASFGVQLF) traverse the membrane as a helical segment. Residues 1040-1104 (AGKLAKCNDP…NFNFDNVGNA (65 aa)) lie on the Extracellular side of the membrane. C1046 and C1057 are oxidised to a cystine. A glycan (N-linked (GlcNAc...) asparagine) is linked at N1064. An intramembrane region (pore-forming) is located at residues 1105–1124 (MLALFEVLSLKGWVEVRDVI). Over 1125 to 1129 (IHRVG) the chain is Extracellular. The chain crosses the membrane as a helical span at residues 1130 to 1159 (PIHGIYIHVFVFLGCMIGLTLFVGVVIANF). Residues 1160-1210 (NENKGTALLTVDQRRWEDLKSRLKIAQPLHLPPRPDNDGFRAKMYDITQHP) are Cytoplasmic-facing. Residues 1211-1227 (FFKRTIALLVLAQSVLL) traverse the membrane as a helical segment. The Extracellular segment spans residues 1228–1236 (SVKWDVEDP). Residues 1237–1260 (VTVPLATMSVVFTFIFVLEVTMKI) traverse the membrane as a helical segment. Over 1261-1271 (IAMSPAGFWQS) the chain is Cytoplasmic. The chain crosses the membrane as a helical span at residues 1272–1293 (RRNRYDLLVTSLGVVWVVLHFA). At 1294-1296 (LLN) the chain is on the extracellular side. The chain crosses the membrane as a helical; Voltage-sensor span at residues 1297–1318 (AYTYMMGACVIVFRFFSICGKH). Over 1319-1331 (VTLKMLLLTVVVS) the chain is Cytoplasmic. The chain crosses the membrane as a helical span at residues 1332–1357 (MYKSFFIIVGMFLLLLCYAFAGVVLF). Residues 1358–1378 (GTVKYGENINRHANFSSAGKA) are Extracellular-facing. Positions 1379-1398 (ITVLFRIVTGEDWNKIMHDC) form an intramembrane region, pore-forming. Residues 1399–1420 (MVQPPFCTPDEFTYWATDCGNY) lie on the Extracellular side of the membrane. Cysteines 1405 and 1417 form a disulfide. The chain crosses the membrane as a helical span at residues 1421-1447 (AGALMYFCSFYVIIAYIMLNLLVAIIV). At 1448-1738 (ENFSLFYSTE…DESGDDLLDI (291 aa)) the chain is on the cytoplasmic side. The tract at residues 1611–1679 (PPSIETTQPS…WRLPSAPKPI (69 aa)) is disordered. A compositionally biased stretch (polar residues) spans 1613-1631 (SIETTQPSEDTNANSQDHN). The span at 1633–1648 (QPESSSQQQLLSPTLS) shows a compositional bias: low complexity.

It belongs to the NALCN family. As to quaternary structure, found in a complex with NALCN, UNC79, UNC80 and NACL1; these auxiliary subunits are indispensable for the function of NALCN channel. Interacts with UNC80; required for the NALCN activation/inhibition by GPCRs in neurons. Found in a complex with NALCN, UNC79 and UNC80; UNC80 bridges NALCN to UNC79. Interacts with CHRM3. Post-translationally, phosphorylated on tyrosine residues. Predominantly expressed in the brain, moderately in the heart and weakly in the pancreas.

Its subcellular location is the cell membrane. It carries out the reaction Na(+)(in) = Na(+)(out). With respect to regulation, inhibited by low micromolar concentrations of Gd(3+) and high micromolar concentrations of verapamil. Insensitive to tetrodotoxin (TTX) and potentiated by low external Ca(2+) concentration. In terms of biological role, voltage-gated ion channel responsible for the resting Na(+) permeability that controls neuronal excitability. NALCN channel functions as a multi-protein complex, which consists at least of NALCN, NALF1, UNC79 and UNC80. NALCN is the voltage-sensing, pore-forming subunit of the NALCN channel complex. NALCN channel complex is constitutively active and conducts monovalent cations but is blocked by physiological concentrations of extracellular divalent cations. In addition to its role in regulating neuronal excitability, is required for normal respiratory rhythm, systemic osmoregulation by controlling the serum sodium concentration and in the regulation of the intestinal pace-making activity in the interstitial cells of Cajal. NALCN channel is also activated by neuropeptides such as neurotensin and substance P (SP) through a SRC family kinases-dependent pathway. In addition, NALCN activity is enhanced/modulated by several GPCRs, such as CHRM3. The chain is Sodium leak channel NALCN (Nalcn) from Rattus norvegicus (Rat).